A 317-amino-acid chain; its full sequence is L-lactate dehydrogenase (317 aa).

NAD(+)-binding positions include V17, D38, K43, Y69, and 83 to 84 (GA). Residues Q86 and R92 each coordinate substrate. NAD(+)-binding positions include S105, 122 to 124 (ATN), and S147. 124-127 (NPVD) is a substrate binding site. 152–155 (DSAR) contributes to the substrate binding site. Beta-D-fructose 1,6-bisphosphate is bound by residues R157 and H172. Residue H179 is the Proton acceptor of the active site. Y224 carries the phosphotyrosine modification. A substrate-binding site is contributed by T233.

The protein belongs to the LDH/MDH superfamily. LDH family. Homotetramer.

It is found in the cytoplasm. It catalyses the reaction (S)-lactate + NAD(+) = pyruvate + NADH + H(+). It participates in fermentation; pyruvate fermentation to lactate; (S)-lactate from pyruvate: step 1/1. Allosterically activated by fructose 1,6-bisphosphate (FBP). Functionally, catalyzes the conversion of lactate to pyruvate. This Bacillus velezensis (strain DSM 23117 / BGSC 10A6 / LMG 26770 / FZB42) (Bacillus amyloliquefaciens subsp. plantarum) protein is L-lactate dehydrogenase.